The primary structure comprises 322 residues: NADH-quinone oxidoreductase subunit H (322 aa).

Helical transmembrane passes span 14-34, 81-101, 114-134, 149-169, 186-206, 237-257, 265-285, and 302-322; these read IFMH…YMSF, YIFV…IPVI, VGVL…LLAG, SIAQ…GIVA, LWNI…GMAL, FFIS…TLFF, FPPV…FVLI, and WKFL…YILI.

The protein belongs to the complex I subunit 1 family. NDH-1 is composed of 13 different subunits. Subunits NuoA, H, J, K, L, M, N constitute the membrane sector of the complex.

It is found in the cell inner membrane. The enzyme catalyses a quinone + NADH + 5 H(+)(in) = a quinol + NAD(+) + 4 H(+)(out). In terms of biological role, NDH-1 shuttles electrons from NADH, via FMN and iron-sulfur (Fe-S) centers, to quinones in the respiratory chain. The immediate electron acceptor for the enzyme in this species is believed to be ubiquinone. Couples the redox reaction to proton translocation (for every two electrons transferred, four hydrogen ions are translocated across the cytoplasmic membrane), and thus conserves the redox energy in a proton gradient. This subunit may bind ubiquinone. The polypeptide is NADH-quinone oxidoreductase subunit H (Blochmanniella floridana).